Reading from the N-terminus, the 370-residue chain is Molybdenum import ATP-binding protein ModC (370 aa).

The region spanning M1–R232 is the ABC transporter domain. G30–T37 contacts ATP. A Mop domain is found at M292–E363.

Belongs to the ABC transporter superfamily. Molybdate importer (TC 3.A.1.8) family. As to quaternary structure, the complex is composed of two ATP-binding proteins (ModC), two transmembrane proteins (ModB) and a solute-binding protein (ModA).

Its subcellular location is the cell inner membrane. It carries out the reaction molybdate(out) + ATP + H2O = molybdate(in) + ADP + phosphate + H(+). Functionally, part of the ABC transporter complex ModABC involved in molybdenum import. Responsible for energy coupling to the transport system. In Rhodospirillum rubrum (strain ATCC 11170 / ATH 1.1.1 / DSM 467 / LMG 4362 / NCIMB 8255 / S1), this protein is Molybdenum import ATP-binding protein ModC.